Consider the following 250-residue polypeptide: Probable transcriptional regulatory protein Ppha_0657 (250 aa).

The protein belongs to the TACO1 family.

Its subcellular location is the cytoplasm. This chain is Probable transcriptional regulatory protein Ppha_0657, found in Pelodictyon phaeoclathratiforme (strain DSM 5477 / BU-1).